The primary structure comprises 479 residues: ATP-dependent protease ATPase subunit HslU (479 aa).

ATP is bound by residues isoleucine 32, 74–79 (GVGKTE), aspartate 290, glutamate 355, and arginine 427.

The protein belongs to the ClpX chaperone family. HslU subfamily. As to quaternary structure, a double ring-shaped homohexamer of HslV is capped on each side by a ring-shaped HslU homohexamer. The assembly of the HslU/HslV complex is dependent on binding of ATP.

The protein resides in the cytoplasm. In terms of biological role, ATPase subunit of a proteasome-like degradation complex; this subunit has chaperone activity. The binding of ATP and its subsequent hydrolysis by HslU are essential for unfolding of protein substrates subsequently hydrolyzed by HslV. HslU recognizes the N-terminal part of its protein substrates and unfolds these before they are guided to HslV for hydrolysis. The polypeptide is ATP-dependent protease ATPase subunit HslU (Leptospira interrogans serogroup Icterohaemorrhagiae serovar Lai (strain 56601)).